The sequence spans 437 residues: Trigger factor (437 aa).

A PPIase FKBP-type domain is found at 161-246; sequence GDQVNINFVG…VNSVSEAVLP (86 aa).

This sequence belongs to the FKBP-type PPIase family. Tig subfamily.

The protein localises to the cytoplasm. It carries out the reaction [protein]-peptidylproline (omega=180) = [protein]-peptidylproline (omega=0). Involved in protein export. Acts as a chaperone by maintaining the newly synthesized protein in an open conformation. Functions as a peptidyl-prolyl cis-trans isomerase. The chain is Trigger factor from Cellvibrio japonicus (strain Ueda107) (Pseudomonas fluorescens subsp. cellulosa).